A 1938-amino-acid polypeptide reads, in one-letter code: Histone-lysine N-methyltransferase SETD1B (1938 aa).

Over residues 1 to 20 (MSFKEAKPGERGKNPEDHGR) the composition is skewed to basic and acidic residues. Residues 1–44 (MSFKEAKPGERGKNPEDHGRKQAASWMNGMEAANQPSTSAEKKS) form a disordered region. The RRM domain occupies 111-199 (DEFYVGPVPP…NIIHAELDTK (89 aa)). Disordered stretches follow at residues 226 to 357 (LDAS…ENTF), 369 to 484 (FPRT…TRIA), 496 to 630 (LISS…EVTP), 652 to 688 (GFPP…VPPP), 916 to 1125 (KEPP…SSPV), 1147 to 1174 (HQTA…HKQD), 1187 to 1206 (MQQN…NEEE), 1327 to 1373 (KTLS…GNSL), 1413 to 1468 (FPES…VPHM), 1496 to 1528 (ECEF…PKKP), and 1744 to 1772 (DEPP…RRSE). Composition is skewed to polar residues over residues 254–290 (VTPN…QGTP), 298–312 (PFSQ…QTTP), 375–407 (LSHS…PQTS), and 446–457 (DSTTEQKASFAQ). The segment covering 512-531 (SPISSSSSQLSPIPPYSSSS) has biased composition (low complexity). Polar residues-rich tracts occupy residues 532–546 (HYQD…SSTG) and 569–585 (SLCQ…QINQ). Residues 588–599 (RKMETLDNKELV) are compositionally biased toward basic and acidic residues. Residues 619–628 (EDMEISDDEV) are compositionally biased toward acidic residues. Acidic residues-rich tracts occupy residues 976 to 990 (SEGE…DDGE) and 1054 to 1114 (DSSD…EDFF). Basic and acidic residues predominate over residues 1159-1174 (KDLDVPLVESKEHKQD). The segment covering 1329 to 1343 (LSEEELPRTPGRDIL) has biased composition (basic and acidic residues). Composition is skewed to polar residues over residues 1349-1358 (LGKSQSTETI) and 1441-1453 (EPTS…NSVP). Positions 1454–1464 (SPIPFASPPRG) are enriched in pro residues. A compositionally biased stretch (polar residues) spans 1751-1765 (QGKSIPAQPQASTRA). The RxxxRR motif motif lies at 1770-1775 (RSEQRR). The region spanning 1799–1916 (KKIRFCKSHI…VNEEITYDYK (118 aa)) is the SET domain. Tyr-1915 lines the S-adenosyl-L-methionine pocket. In terms of domain architecture, Post-SET spans 1922-1938 (VKIPCLCGAENCRGTLN).

It belongs to the class V-like SAM-binding methyltransferase superfamily. As to quaternary structure, component of the SET1B/COMPASS complex.

It is found in the nucleus speckle. Its subcellular location is the chromosome. It carries out the reaction L-lysyl(4)-[histone H3] + 3 S-adenosyl-L-methionine = N(6),N(6),N(6)-trimethyl-L-lysyl(4)-[histone H3] + 3 S-adenosyl-L-homocysteine + 3 H(+). Its function is as follows. Histone methyltransferase that specifically methylates 'Lys-4' of histone H3, when part of the SET1 histone methyltransferase (HMT) complex, but not if the neighboring 'Lys-9' residue is already methylated. H3 'Lys-4' methylation represents a specific tag for epigenetic transcriptional activation. This Xenopus laevis (African clawed frog) protein is Histone-lysine N-methyltransferase SETD1B (setd1b).